A 388-amino-acid polypeptide reads, in one-letter code: 1-deoxy-D-xylulose 5-phosphate reductoisomerase (388 aa).

Thr-15, Gly-16, Ser-17, Ile-18, and Asn-127 together coordinate NADPH. Lys-128 is a 1-deoxy-D-xylulose 5-phosphate binding site. Glu-129 serves as a coordination point for NADPH. Asp-153 is a Mn(2+) binding site. Positions 154, 155, 179, and 202 each coordinate 1-deoxy-D-xylulose 5-phosphate. Glu-155 contributes to the Mn(2+) binding site. Gly-208 is a binding site for NADPH. 1-deoxy-D-xylulose 5-phosphate is bound by residues Ser-215, Asn-220, Lys-221, and Glu-224. Glu-224 is a binding site for Mn(2+).

It belongs to the DXR family. Mg(2+) serves as cofactor. Requires Mn(2+) as cofactor.

It carries out the reaction 2-C-methyl-D-erythritol 4-phosphate + NADP(+) = 1-deoxy-D-xylulose 5-phosphate + NADPH + H(+). It participates in isoprenoid biosynthesis; isopentenyl diphosphate biosynthesis via DXP pathway; isopentenyl diphosphate from 1-deoxy-D-xylulose 5-phosphate: step 1/6. Its function is as follows. Catalyzes the NADPH-dependent rearrangement and reduction of 1-deoxy-D-xylulose-5-phosphate (DXP) to 2-C-methyl-D-erythritol 4-phosphate (MEP). The chain is 1-deoxy-D-xylulose 5-phosphate reductoisomerase from Bacteroides fragilis (strain ATCC 25285 / DSM 2151 / CCUG 4856 / JCM 11019 / LMG 10263 / NCTC 9343 / Onslow / VPI 2553 / EN-2).